We begin with the raw amino-acid sequence, 60 residues long: Large ribosomal subunit protein bL32 (60 aa).

The interval 1–60 (MAVQQNKKTPSKRGMHRSHDFLVAPQLSVEQTTGETHMRHHISPNGFYRGRKVLKTKNDE) is disordered. A compositionally biased stretch (basic residues) spans 49 to 60 (RGRKVLKTKNDE).

Belongs to the bacterial ribosomal protein bL32 family.

The sequence is that of Large ribosomal subunit protein bL32 from Herminiimonas arsenicoxydans.